The following is a 555-amino-acid chain: Transcription factor kojR (555 aa).

Positions Cys-21–Cys-47 form a DNA-binding region, zn(2)-C6 fungal-type. The segment at Pro-51–Pro-73 is disordered.

It is found in the nucleus. Its function is as follows. Transcription factor that regulates the gene cluster that mediates the biosynthesis of 5-hydroxy-2-hydroxymethyl-1,4-pyrone, also know as kojic acid, a by-product in the fermentation process of malting rice that acts as a chelation agent. Mediates the expression of kojA and kojT via binding of an 11-nucleotide palindromic sequence, 5'-CGRCTWAGYCG-3' (R=A/G, W=A/T, Y=C/T) within the target gene promoters. The protein is Transcription factor kojR of Aspergillus flavus (strain ATCC 200026 / FGSC A1120 / IAM 13836 / NRRL 3357 / JCM 12722 / SRRC 167).